The chain runs to 302 residues: Phosphoribosylaminoimidazole-succinocarboxamide synthase (302 aa).

The protein belongs to the SAICAR synthetase family.

The enzyme catalyses 5-amino-1-(5-phospho-D-ribosyl)imidazole-4-carboxylate + L-aspartate + ATP = (2S)-2-[5-amino-1-(5-phospho-beta-D-ribosyl)imidazole-4-carboxamido]succinate + ADP + phosphate + 2 H(+). The protein operates within purine metabolism; IMP biosynthesis via de novo pathway; 5-amino-1-(5-phospho-D-ribosyl)imidazole-4-carboxamide from 5-amino-1-(5-phospho-D-ribosyl)imidazole-4-carboxylate: step 1/2. The protein is Phosphoribosylaminoimidazole-succinocarboxamide synthase of Ralstonia nicotianae (strain ATCC BAA-1114 / GMI1000) (Ralstonia solanacearum).